We begin with the raw amino-acid sequence, 426 residues long: Histidine--tRNA ligase (426 aa).

Belongs to the class-II aminoacyl-tRNA synthetase family. In terms of assembly, homodimer.

It is found in the cytoplasm. It carries out the reaction tRNA(His) + L-histidine + ATP = L-histidyl-tRNA(His) + AMP + diphosphate + H(+). The protein is Histidine--tRNA ligase of Streptococcus pyogenes serotype M49 (strain NZ131).